A 142-amino-acid chain; its full sequence is Hemoglobin subunit alpha-1 (142 aa).

In terms of domain architecture, Globin spans 2–142 (KLSADDKHNV…VGYVLASKYR (141 aa)). O2 is bound at residue His59. His88 lines the heme b pocket.

The protein belongs to the globin family. Major hemoglobin is a heterotetramer of two alpha-1 chains and two beta-1 chains. In terms of tissue distribution, red blood cells.

In terms of biological role, involved in oxygen transport from the lung to the various peripheral tissues. This Triturus cristatus (Great crested newt) protein is Hemoglobin subunit alpha-1.